Here is a 149-residue protein sequence, read N- to C-terminus: Calmodulin-like protein 3 (149 aa).

EF-hand domains follow at residues 8–43 (EQIAEFKEAFSLFDKDGDGSITTQELGTVMRSLGQN), 44–79 (PTEAELQGMVNEIDKDGNGTVDFPEFLTMMSRKMKD), 81–116 (DSEEEIREAFRVFDKDGNGFVSAAELRHVMTKLGEK), and 117–149 (LSDEEVDEMIQAADTDGDGQVNYEEFVHMLVSK). Ca(2+) is bound by residues aspartate 21, aspartate 23, aspartate 25, serine 27, glutamate 32, aspartate 57, aspartate 59, asparagine 61, threonine 63, glutamate 68, aspartate 94, aspartate 96, asparagine 98, glutamate 105, aspartate 130, aspartate 132, aspartate 134, glutamine 136, and glutamate 141.

Belongs to the calmodulin family. In terms of assembly, interacts with MYO10, the interaction is calcium-dependent and essential for MYO10 function in filopodial extension.

Its function is as follows. May function as a specific light chain of unconventional myosin-10 (MYO10), also enhances MYO10 translation, possibly by acting as a chaperone for the emerging MYO10 heavy chain protein. May compete with calmodulin by binding, with different affinities, to cellular substrates. The protein is Calmodulin-like protein 3 (Calml3) of Mus musculus (Mouse).